Consider the following 451-residue polypeptide: Tubulin alpha-1A chain (451 aa).

GTP-binding residues include Gly-10, Gln-11, Ala-12, and Gln-15. Lys-40 bears the N6-acetyllysine mark. GTP is bound by residues Glu-71, Ala-99, Ser-140, Gly-143, Gly-144, Thr-145, Gly-146, Thr-179, Glu-183, Asn-206, Tyr-224, Asn-228, and Leu-252. A Mg(2+)-binding site is contributed by Glu-71. Glu-254 is an active-site residue. A 3'-nitrotyrosine modification is found at Tyr-282. Ser-439 carries the phosphoserine modification. 2 positions are modified to 5-glutamyl polyglutamate: Glu-443 and Glu-445. Tyr-451 is subject to 3'-nitrotyrosine.

It belongs to the tubulin family. Heterodimer of alpha- and beta-tubulin. A typical microtubule is a hollow water-filled tube with an outer diameter of 25 nm and an inner diameter of 15 nM. Alpha-beta heterodimers associate head-to-tail to form protofilaments running lengthwise along the microtubule wall with the beta-tubulin subunit facing the microtubule plus end conferring a structural polarity. Microtubules usually have 13 protofilaments but different protofilament numbers can be found in some organisms and specialized cells. Interacts with gamma-tubulin; the interaction allows microtubules to nucleate from the gamma-tubulin ring complex (gTuRC). Nascent microtubule interacts (via alpha-tubulin MREC motif) with TTC5/STRAP; this interaction may result in tubulin mRNA-targeted degradation. Component of sperm flagellar doublet microtubules. Mg(2+) serves as cofactor. Post-translationally, some glutamate residues at the C-terminus are polyglycylated, resulting in polyglycine chains on the gamma-carboxyl group. Glycylation is mainly limited to tubulin incorporated into axonemes (cilia and flagella) whereas glutamylation is prevalent in neuronal cells, centrioles, axonemes, and the mitotic spindle. Both modifications can coexist on the same protein on adjacent residues, and lowering polyglycylation levels increases polyglutamylation, and reciprocally. Cilia and flagella glycylation is required for their stability and maintenance. Flagella glycylation controls sperm motility. Some glutamate residues at the C-terminus are polyglutamylated, resulting in polyglutamate chains on the gamma-carboxyl group. Polyglutamylation plays a key role in microtubule severing by spastin (SPAST). SPAST preferentially recognizes and acts on microtubules decorated with short polyglutamate tails: severing activity by SPAST increases as the number of glutamates per tubulin rises from one to eight, but decreases beyond this glutamylation threshold. Glutamylation is also involved in cilia motility. In terms of processing, acetylation of alpha chains at Lys-40 is located inside the microtubule lumen. This modification has been correlated with increased microtubule stability, intracellular transport and ciliary assembly. Post-translationally, methylation of alpha chains at Lys-40 is found in mitotic microtubules and is required for normal mitosis and cytokinesis contributing to genomic stability. Nitration of Tyr-451 is irreversible and interferes with normal dynein intracellular distribution. In terms of processing, undergoes a tyrosination/detyrosination cycle, the cyclic removal and re-addition of a C-terminal tyrosine residue by the enzymes tubulin tyrosine carboxypeptidase (MATCAP1, VASH1 or VASH2) and tubulin tyrosine ligase (TTL), respectively. Post-translationally, tyrosination promotes microtubule interaction with CAP-Gly domain-containing proteins such as CLIP1, CLIP2 and DCTN1. Tyrosination regulates the initiation of dynein-dynactin motility via interaction with DCTN1, which brings the dynein-dynactin complex into contact with microtubules. In neurons, tyrosinated tubulins mediate the initiation of retrograde vesicle transport. Detyrosination is involved in metaphase plate congression by guiding chromosomes during mitosis: detyrosination promotes interaction with CENPE, promoting pole-proximal transport of chromosomes toward the equator. Detyrosination increases microtubules-dependent mechanotransduction in dystrophic cardiac and skeletal muscle. In cardiomyocytes, detyrosinated microtubules are required to resist to contractile compression during contraction: detyrosination promotes association with desmin (DES) at force-generating sarcomeres, leading to buckled microtubules and mechanical resistance to contraction.

The protein localises to the cytoplasm. It localises to the cytoskeleton. It is found in the flagellum axoneme. It carries out the reaction GTP + H2O = GDP + phosphate + H(+). Tubulin is the major constituent of microtubules, protein filaments consisting of alpha- and beta-tubulin heterodimers. Microtubules grow by the addition of GTP-tubulin dimers to the microtubule end, where a stabilizing cap forms. Below the cap, tubulin dimers are in GDP-bound state, owing to GTPase activity of alpha-tubulin. In Sus scrofa (Pig), this protein is Tubulin alpha-1A chain (TUBA1A).